A 442-amino-acid chain; its full sequence is Exodeoxyribonuclease 7 large subunit (442 aa).

The protein belongs to the XseA family. Heterooligomer composed of large and small subunits.

Its subcellular location is the cytoplasm. It carries out the reaction Exonucleolytic cleavage in either 5'- to 3'- or 3'- to 5'-direction to yield nucleoside 5'-phosphates.. In terms of biological role, bidirectionally degrades single-stranded DNA into large acid-insoluble oligonucleotides, which are then degraded further into small acid-soluble oligonucleotides. The chain is Exodeoxyribonuclease 7 large subunit from Shewanella loihica (strain ATCC BAA-1088 / PV-4).